A 204-amino-acid polypeptide reads, in one-letter code: Imidazoleglycerol-phosphate dehydratase (204 aa).

Belongs to the imidazoleglycerol-phosphate dehydratase family.

The protein localises to the cytoplasm. The enzyme catalyses D-erythro-1-(imidazol-4-yl)glycerol 3-phosphate = 3-(imidazol-4-yl)-2-oxopropyl phosphate + H2O. It functions in the pathway amino-acid biosynthesis; L-histidine biosynthesis; L-histidine from 5-phospho-alpha-D-ribose 1-diphosphate: step 6/9. The protein is Imidazoleglycerol-phosphate dehydratase of Rhodococcus jostii (strain RHA1).